The primary structure comprises 289 residues: Pantothenate synthetase (289 aa).

Residue 28 to 35 (MGCLHEGH) coordinates ATP. His35 functions as the Proton donor in the catalytic mechanism. Gln59 serves as a coordination point for (R)-pantoate. Gln59 contributes to the beta-alanine binding site. 147 to 150 (GLKD) provides a ligand contact to ATP. Gln153 contacts (R)-pantoate. ATP-binding positions include Val176 and 184-187 (MSSR).

This sequence belongs to the pantothenate synthetase family. As to quaternary structure, homodimer.

The protein localises to the cytoplasm. It carries out the reaction (R)-pantoate + beta-alanine + ATP = (R)-pantothenate + AMP + diphosphate + H(+). Its pathway is cofactor biosynthesis; (R)-pantothenate biosynthesis; (R)-pantothenate from (R)-pantoate and beta-alanine: step 1/1. Its function is as follows. Catalyzes the condensation of pantoate with beta-alanine in an ATP-dependent reaction via a pantoyl-adenylate intermediate. This Magnetococcus marinus (strain ATCC BAA-1437 / JCM 17883 / MC-1) protein is Pantothenate synthetase.